The sequence spans 517 residues: MDIIGGQHLRQMWDDLADVYGHKTALICESSGGVVNRYSYLELNQEINRTANLFYTLGIRKGDKVALHLDNCPEFIFCWFGLAKIGAIMVPINARLLREESAWILQNSQACLLVTSAQFYPMYQQIQQEDATQLRHICLTDVALPADDGVSSFTQLKNQQPATLCYAPPLLTDDTAEILFTSGTTSRPKGVVITHYNLRFAGYYSAWQCALRDDDVYLTVMPAFHIDCQCTAAMAAFSAGATFVLVEKYSARAFWGQVQKYRATITECIPMMIRTLMVQPPSANDRQHRLREVMFYLNLSEQEKDAFCERFGVRLLTSYGMTETIVGIIGDRPGDKRRWPSIGRAGFCYEAEIRDDHNRPLPAGEIGEICIKGVPGKTIFKEYFLNPKATAKVLEADGWLHTGDTGYCDEEGFFYFVDRRCNMIKRGGENVSCVELENIIATHPKIQDIVVVGIKDSIRDEAIKAFVVLNEGETLSEEEFFRFCEQNMAKFKVPSYLEIRKDLPRNCSGKIIRKNLK.

The protein belongs to the ATP-dependent AMP-binding enzyme family.

It catalyses the reaction 4-(trimethylamino)butanoate + ATP + CoA = 4-(trimethylamino)butanoyl-CoA + AMP + diphosphate. The catalysed reaction is crotonobetaine + ATP + CoA = crotonobetainyl-CoA + AMP + diphosphate. It carries out the reaction (R)-carnitine + ATP + CoA = (R)-carnitinyl-CoA + AMP + diphosphate. Its pathway is amine and polyamine metabolism; carnitine metabolism. In terms of biological role, catalyzes the transfer of CoA to carnitine, generating the initial carnitinyl-CoA needed for the CaiB reaction cycle. Also has activity toward crotonobetaine and gamma-butyrobetaine. The sequence is that of Crotonobetaine/carnitine--CoA ligase from Escherichia coli (strain SE11).